The chain runs to 194 residues: Peptidyl-tRNA hydrolase (194 aa).

Y17 contacts tRNA. Residue H22 is the Proton acceptor of the active site. Positions 68, 70, and 116 each coordinate tRNA.

This sequence belongs to the PTH family. In terms of assembly, monomer.

The protein resides in the cytoplasm. The enzyme catalyses an N-acyl-L-alpha-aminoacyl-tRNA + H2O = an N-acyl-L-amino acid + a tRNA + H(+). Hydrolyzes ribosome-free peptidyl-tRNAs (with 1 or more amino acids incorporated), which drop off the ribosome during protein synthesis, or as a result of ribosome stalling. Its function is as follows. Catalyzes the release of premature peptidyl moieties from peptidyl-tRNA molecules trapped in stalled 50S ribosomal subunits, and thus maintains levels of free tRNAs and 50S ribosomes. This chain is Peptidyl-tRNA hydrolase, found in Haemophilus influenzae (strain 86-028NP).